The sequence spans 436 residues: Citrate synthase (436 aa).

Catalysis depends on residues histidine 311 and aspartate 370.

The protein belongs to the citrate synthase family.

It carries out the reaction oxaloacetate + acetyl-CoA + H2O = citrate + CoA + H(+). It participates in carbohydrate metabolism; tricarboxylic acid cycle; isocitrate from oxaloacetate: step 1/2. This chain is Citrate synthase (gltA), found in Rickettsia typhi (strain ATCC VR-144 / Wilmington).